We begin with the raw amino-acid sequence, 746 residues long: Tudor domain-containing protein krimp (746 aa).

The involved in homooligomerization stretch occupies residues 1–310; the sequence is MNLEDISMIM…RDIYNQILKD (310 aa). Residues 311-489 form a non-canonical tudor domain region; that stretch reads MAAFPENTIV…PAGITEDDMA (179 aa). The C3H1-type zinc-finger motif lies at 511-540; it reads KDEQRICRHYDPKLNGCFKGNNCRFAHEPF. A Tudor domain is found at 613–670; it reads KPRLLDIVLALYSDGCFYRAQIIDEFPSEYMIFYVDYGNTEFVPLSCLAPCENVDSFK.

Belongs to the Tudor domain containing protein family. As to quaternary structure, homooligomerizes (via N-terminus). Component of the ping-pong piRNA processing (4P) complex consisting of krimp, aub and AGO3; a single molecule of krimp can bind both aub and AGO3 without the need for homooligomerization. Interacts (via canonical tudor domain) with aub (via N-terminus when symmetrically dimethylated on arginine residues). Interacts (via non-canonical tudor domain) with AGO3 (via N-terminus when unmethylated on arginine residues); this interaction leads to symmetrical dimethylation on AGO3 arginine residues and its subsequent dissociation from krimp. Krimp associated AGO3 is mostly free of piRNA binding and the interaction plays an important role in the loading of AGO3 with piRNAs; piRNA binding stimulates methylation of ACO3 by the csul/PRMT5 methylosome complex and promotes dissociation of the two proteins. Widely expressed in female germline cells, including differentiating germ cells in germarium and egg chambers (at protein level).

The protein localises to the cytoplasm. It is found in the perinuclear region. Its subcellular location is the cytoplasmic ribonucleoprotein granule. Functionally, stable structural component of the perinuclear meiotic nuage, a germline-specific subcellular membraneless ribonucleoprotein compartment involved in production of transposable element-repressing Piwi-interacting RNA (piRNA)-induced silencing complexes (piRISCs), which are essential for maintaining germline integrity during oogenesis. Scaffold component of the ping-pong piRNA processing (4P) complex that recruits the Piwi proteins aub and AGO3 to specific subregions of the nuage where it coordinates their activity in the ping-pong amplification step of secondary piRNA biogenesis. Binds methylated aub, which is associated with piRNA, and unmethylated AGO3, which is not associated with piRNA, bringing the Piwi proteins into close proximity and facilitating the loading of freshly cut piRNAs generated by aub onto AGO3. Promotes asymmetric ping-pong amplification by aub and AGO3 to bias production towards antisense piRNAs capable of silencing transposable elements. Required for symmetrical dimethylation of AGO3, probably by recruitment to the nuage where methylosome components are located; dimethylation promotes AGO3 dissociation and interaction with other tudor-domain containing proteins such as tud. Required for the recruitment of mael to the perinuclear meiotic nuage. Required for the recruitment of aub to the nuage in testes but not in ovaries. Involved in repression of long interspersed nuclear elements (LINEs) including HeT-A, I-element LINEs and possibly mst40, but not TART LINEs. This Drosophila melanogaster (Fruit fly) protein is Tudor domain-containing protein krimp.